The chain runs to 227 residues: Triosephosphate isomerase (227 aa).

9–11 is a binding site for substrate; sequence NFK. Catalysis depends on H93, which acts as the Electrophile. E141 serves as the catalytic Proton acceptor. Substrate-binding positions include I146, G180, and 201-202; that span reads AS.

The protein belongs to the triosephosphate isomerase family. As to quaternary structure, homotetramer; dimer of dimers.

The protein resides in the cytoplasm. The enzyme catalyses D-glyceraldehyde 3-phosphate = dihydroxyacetone phosphate. It participates in carbohydrate biosynthesis; gluconeogenesis. It functions in the pathway carbohydrate degradation; glycolysis; D-glyceraldehyde 3-phosphate from glycerone phosphate: step 1/1. Functionally, involved in the gluconeogenesis. Catalyzes stereospecifically the conversion of dihydroxyacetone phosphate (DHAP) to D-glyceraldehyde-3-phosphate (G3P). This chain is Triosephosphate isomerase, found in Saccharolobus solfataricus (strain ATCC 35092 / DSM 1617 / JCM 11322 / P2) (Sulfolobus solfataricus).